Reading from the N-terminus, the 1719-residue chain is Cilia- and flagella-associated protein 43 (1719 aa).

Positions 94-120 (VREEGAGGGADKPSGSGAVSGKQQSSG) are disordered. 6 WD repeats span residues 122-165 (SVVL…GRCR), 174-214 (SSTS…EKAV), 226-263 (PAGA…PLQL), 308-345 (TSGA…AAAI), 413-452 (CHVG…LLGR), and 513-552 (LHSA…GRVR). Residues 569-596 (TWPRSDGGSGAASGHAQAGPVSTTSAEG) are disordered. 2 WD repeats span residues 697–736 (AHAR…LAAQ) and 749–788 (ITAG…AVAN). The disordered stretch occupies residues 1022-1045 (RAKQEAARKADEDAAKRSAKDNAG). Residues 1073-1114 (PKPAWLVALGVEPDAVNPKLITEEQNRELKEWQAKEKSLQEE) form a WD 9 repeat. 3 disordered regions span residues 1220-1269 (MPGG…AAAA), 1277-1296 (ATAA…GAAG), and 1325-1372 (TLNP…AAAA). Positions 1221-1233 (PGGGAIGAAGGHQ) are enriched in gly residues. Low complexity predominate over residues 1257–1269 (ASLAHSPSGAAAA). Low complexity predominate over residues 1344–1358 (SSALHPSHSHASVHG). 2 coiled-coil regions span residues 1524-1609 (AAQW…RSAQ) and 1651-1679 (HKKL…RLRT). Residues 1685-1719 (ESGAVAGMPSPPRRLPPDIKLLAGSPSSSSVAGRT) are disordered. A compositionally biased stretch (polar residues) spans 1709–1719 (SPSSSSVAGRT).

This sequence belongs to the CFAP43 family.

The protein resides in the cell projection. Its subcellular location is the cilium. It localises to the flagellum. The protein localises to the cytoplasm. It is found in the cytoskeleton. The protein resides in the flagellum axoneme. In terms of biological role, flagellar protein involved in flagellum axoneme organization and function. In Chlamydomonas reinhardtii (Chlamydomonas smithii), this protein is Cilia- and flagella-associated protein 43.